The following is a 349-amino-acid chain: Small ribosomal subunit biogenesis GTPase RsgA 2 (349 aa).

Residues 97–252 form the CP-type G domain; sequence AEQLIATNVD…IIDTPGMREL (156 aa). GTP is bound by residues 142 to 145 and 194 to 202; these read TKAD and GSSGVGKST. Positions 275, 280, 282, and 288 each coordinate Zn(2+).

The protein belongs to the TRAFAC class YlqF/YawG GTPase family. RsgA subfamily. Monomer. Associates with 30S ribosomal subunit, binds 16S rRNA. Requires Zn(2+) as cofactor.

The protein localises to the cytoplasm. Functionally, one of several proteins that assist in the late maturation steps of the functional core of the 30S ribosomal subunit. Helps release RbfA from mature subunits. May play a role in the assembly of ribosomal proteins into the subunit. Circularly permuted GTPase that catalyzes slow GTP hydrolysis, GTPase activity is stimulated by the 30S ribosomal subunit. The polypeptide is Small ribosomal subunit biogenesis GTPase RsgA 2 (Vibrio vulnificus (strain CMCP6)).